The sequence spans 95 residues: Aspartyl/glutamyl-tRNA(Asn/Gln) amidotransferase subunit C (95 aa).

It belongs to the GatC family. As to quaternary structure, heterotrimer of A, B and C subunits.

The enzyme catalyses L-glutamyl-tRNA(Gln) + L-glutamine + ATP + H2O = L-glutaminyl-tRNA(Gln) + L-glutamate + ADP + phosphate + H(+). The catalysed reaction is L-aspartyl-tRNA(Asn) + L-glutamine + ATP + H2O = L-asparaginyl-tRNA(Asn) + L-glutamate + ADP + phosphate + 2 H(+). Its function is as follows. Allows the formation of correctly charged Asn-tRNA(Asn) or Gln-tRNA(Gln) through the transamidation of misacylated Asp-tRNA(Asn) or Glu-tRNA(Gln) in organisms which lack either or both of asparaginyl-tRNA or glutaminyl-tRNA synthetases. The reaction takes place in the presence of glutamine and ATP through an activated phospho-Asp-tRNA(Asn) or phospho-Glu-tRNA(Gln). The chain is Aspartyl/glutamyl-tRNA(Asn/Gln) amidotransferase subunit C from Bartonella quintana (strain Toulouse) (Rochalimaea quintana).